A 128-amino-acid chain; its full sequence is Protein SOB FIVE-LIKE 3 (128 aa).

Disordered regions lie at residues 1-26 (MERE…EEEE) and 54-128 (KDSD…HKKK). Residues 8-18 (SSESGWTTYIS) show a composition bias toward polar residues. The short motif at 11–16 (SGWTTY) is the SOFL-A element. Residues 59 to 68 (SMASDASSGP) carry the SOFL-B motif. Over residues 80-104 (REGLALRNGKGESNDVYSHRIDDKN) the composition is skewed to basic and acidic residues. The Nuclear localization signal motif lies at 111 to 118 (RKKEKKKS).

The protein belongs to the SOFL plant protein family. Expressed in seedlings, roots, flowers and siliques.

It localises to the cytoplasm. It is found in the nucleus. Functionally, involved in cytokinin-mediated development. This chain is Protein SOB FIVE-LIKE 3, found in Arabidopsis thaliana (Mouse-ear cress).